We begin with the raw amino-acid sequence, 154 residues long: MSPAKVDVTKKSDAKAQALKTAKAVKSGTTKFKKVKKIRTSVTFHRPRTLTKDRNPKYPRISATPRNKLDQYQILKYPLTTESAMKKIEDNNTLVFIVDIRANKKKIKDAVKKMYDIQTKKVNTLIRPDGTKKAYVRLTPDYDALDVANKIGII.

The protein belongs to the universal ribosomal protein uL23 family.

In terms of biological role, this protein binds to a specific region on the 26S rRNA. The polypeptide is Large ribosomal subunit protein uL23 (RPL23A) (Daucus carota (Wild carrot)).